We begin with the raw amino-acid sequence, 128 residues long: Small ribosomal subunit protein eS8 (128 aa).

Belongs to the eukaryotic ribosomal protein eS8 family. Part of the 30S ribosomal subunit.

The protein is Small ribosomal subunit protein eS8 of Methanococcus aeolicus (strain ATCC BAA-1280 / DSM 17508 / OCM 812 / Nankai-3).